A 276-amino-acid polypeptide reads, in one-letter code: Diacetylchitobiose uptake system permease protein DasC (276 aa).

6 helical membrane-spanning segments follow: residues 14 to 34, 74 to 94, 105 to 125, 137 to 157, 186 to 206, and 241 to 261; these read TAVV…ATAF, LIVT…GSFA, GFIV…VIAI, SLVP…ILTL, VILP…FITA, and GATM…FVYL. Residues 70–261 enclose the ABC transmembrane type-1 domain; sequence VSNSLIVTVC…IPILILFVYL (192 aa).

This sequence belongs to the binding-protein-dependent transport system permease family. The complex is composed of two ATP-binding proteins (MsiK), two transmembrane proteins (DasB and DasC) and a solute-binding protein (DasA).

It is found in the cell membrane. Functionally, part of the ABC transporter complex DasABC-MsiK involved in N,N'-diacetylchitobiose ((GlcNAc)2) uptake. Responsible for the translocation of the substrate across the membrane. This Streptomyces coelicolor (strain ATCC BAA-471 / A3(2) / M145) protein is Diacetylchitobiose uptake system permease protein DasC.